Consider the following 159-residue polypeptide: uncharacterized protein (159 aa).

The region spanning 7–151 (LLINYKTLEE…NPLIWEPAHI (145 aa)) is the N-acetyltransferase domain.

This is an uncharacterized protein from Bacillus pumilus (strain SAFR-032).